Here is a 358-residue protein sequence, read N- to C-terminus: Chorismate synthase (358 aa).

R46 is an NADP(+) binding site. FMN contacts are provided by residues R123–S125, N235–A236, G275, K290–S294, and R316.

Belongs to the chorismate synthase family. In terms of assembly, homotetramer. It depends on FMNH2 as a cofactor.

It carries out the reaction 5-O-(1-carboxyvinyl)-3-phosphoshikimate = chorismate + phosphate. It participates in metabolic intermediate biosynthesis; chorismate biosynthesis; chorismate from D-erythrose 4-phosphate and phosphoenolpyruvate: step 7/7. Catalyzes the anti-1,4-elimination of the C-3 phosphate and the C-6 proR hydrogen from 5-enolpyruvylshikimate-3-phosphate (EPSP) to yield chorismate, which is the branch point compound that serves as the starting substrate for the three terminal pathways of aromatic amino acid biosynthesis. This reaction introduces a second double bond into the aromatic ring system. The sequence is that of Chorismate synthase from Sulfurimonas denitrificans (strain ATCC 33889 / DSM 1251) (Thiomicrospira denitrificans (strain ATCC 33889 / DSM 1251)).